A 245-amino-acid polypeptide reads, in one-letter code: Ribonuclease 3 (245 aa).

One can recognise an RNase III domain in the interval 19 to 144 (ASILEERTGH…LIATIYLDGG (126 aa)). E57 is a Mg(2+) binding site. D61 is a catalytic residue. Positions 130 and 133 each coordinate Mg(2+). Residue E133 is part of the active site. The region spanning 169-238 (DAKTELQEWA…AEAMLYREGV (70 aa)) is the DRBM domain.

Belongs to the ribonuclease III family. As to quaternary structure, homodimer. Mg(2+) serves as cofactor.

The protein localises to the cytoplasm. The catalysed reaction is Endonucleolytic cleavage to 5'-phosphomonoester.. In terms of biological role, digests double-stranded RNA. Involved in the processing of primary rRNA transcript to yield the immediate precursors to the large and small rRNAs (23S and 16S). Processes some mRNAs, and tRNAs when they are encoded in the rRNA operon. Processes pre-crRNA and tracrRNA of type II CRISPR loci if present in the organism. This chain is Ribonuclease 3, found in Brucella abortus (strain S19).